The sequence spans 393 residues: Cysteine protease ATG4B (393 aa).

Met-1 bears the N-acetylmethionine mark. At Ser-34 the chain carries Phosphoserine; by PKB/AKT1 and PKB/AKT2. The active-site Nucleophile is Cys-74. An S-nitrosocysteine modification is found at Cys-189. Residues Asp-278 and His-280 contribute to the active site. S-nitrosocysteine is present on residues Cys-292 and Cys-301. A disulfide bridge links Cys-292 with Cys-361. Position 316 is a phosphoserine; by ULK1 (Ser-316). Ser-383 carries the post-translational modification Phosphoserine; by STK26. The LIR signature appears at 388–391 (FEIL). Ser-392 is modified (phosphoserine).

This sequence belongs to the peptidase C54 family. In terms of assembly, interacts with PFKP; promoting phosphorylation of ATG4B at Ser-34. Interacts with GBP7. Phosphorylation at Ser-383 and Ser-392 promotes autophagy by increasing protein delipidation activity without affecting proteolytic activation of ATG8 proteins. Phosphorylation at Ser-316 by ULK1 inhibits autophagy by decreasing both proteolytic activation and delipidation activities. Phosphorylation at Ser-316 is dephosphorylated by protein phosphatase 2A (PP2A). Phosphorylation at Ser-34 by AKT2 promotes its hydrolase activity, leading to increased proteolytic activation and delipidation of ATG8 family proteins. Phosphorylation at Ser-34 by AKT1 promotes mitochondrial localization and inhibition of the F1F0-ATP synthase activity, leading to elevation of mitochondrial reactive oxygen species (ROS). Post-translationally, ubiquitinated by RNF5, leading to its degradation by the proteasome. In terms of processing, S-nitrosylation at Cys-189 and Cys-292 in response to high glucose decreases both proteolytic activation and delipidation activities. O-glycosylated by OGT, leading to increase protease activity, thereby promoting the proteolytic activation of ATG8 family proteins. Post-translationally, forms reversible intrachain disulfide bonds in response to oxidative stress. Forms interchain disulfide bonds, leading to formation of homooligomers in response to oxidation.

The protein localises to the cytoplasm. Its subcellular location is the cytosol. It localises to the cytoplasmic vesicle. It is found in the autophagosome. The protein resides in the endoplasmic reticulum. The protein localises to the mitochondrion. It carries out the reaction [protein]-C-terminal L-amino acid-glycyl-phosphatidylethanolamide + H2O = [protein]-C-terminal L-amino acid-glycine + a 1,2-diacyl-sn-glycero-3-phosphoethanolamine. It catalyses the reaction [protein]-C-terminal L-amino acid-glycyl-phosphatidylserine + H2O = [protein]-C-terminal L-amino acid-glycine + a 1,2-diacyl-sn-glycero-3-phospho-L-serine. With respect to regulation, inhibited by N-ethylmaleimide. Redox-regulated during autophagy since reducing conditions activate ATG4A whereas an oxidizing environment such as the presence of H(2)O(2) inhibits its activity. The cysteine protease activity compounds is inhibited by styrylquinoline compounds 4-28 and LV-320. Cysteine protease that plays a key role in autophagy by mediating both proteolytic activation and delipidation of ATG8 family proteins. Required for canonical autophagy (macroautophagy), non-canonical autophagy as well as for mitophagy. The protease activity is required for proteolytic activation of ATG8 family proteins: cleaves the C-terminal amino acid of ATG8 proteins MAP1LC3A, MAP1LC3B, MAP1LC3C, GABARAPL1, GABARAPL2 and GABARAP, to reveal a C-terminal glycine. Exposure of the glycine at the C-terminus is essential for ATG8 proteins conjugation to phosphatidylethanolamine (PE) and insertion to membranes, which is necessary for autophagy. Protease activity is also required to counteract formation of high-molecular weight conjugates of ATG8 proteins (ATG8ylation): acts as a deubiquitinating-like enzyme that removes ATG8 conjugated to other proteins, such as ATG3. In addition to the protease activity, also mediates delipidation of ATG8 family proteins. Catalyzes delipidation of PE-conjugated forms of ATG8 proteins during macroautophagy. Also involved in non-canonical autophagy, a parallel pathway involving conjugation of ATG8 proteins to single membranes at endolysosomal compartments, by catalyzing delipidation of ATG8 proteins conjugated to phosphatidylserine (PS). Compared to other members of the family (ATG4A, ATG4C or ATG4C), constitutes the major protein for proteolytic activation of ATG8 proteins, while it displays weaker delipidation activity than other ATG4 paralogs. Involved in phagophore growth during mitophagy independently of its protease activity and of ATG8 proteins: acts by regulating ATG9A trafficking to mitochondria and promoting phagophore-endoplasmic reticulum contacts during the lipid transfer phase of mitophagy. This Homo sapiens (Human) protein is Cysteine protease ATG4B.